The primary structure comprises 162 residues: Large ribosomal subunit protein uL10 (162 aa).

It belongs to the universal ribosomal protein uL10 family. Part of the ribosomal stalk of the 50S ribosomal subunit. The N-terminus interacts with L11 and the large rRNA to form the base of the stalk. The C-terminus forms an elongated spine to which L12 dimers bind in a sequential fashion forming a multimeric L10(L12)X complex.

Forms part of the ribosomal stalk, playing a central role in the interaction of the ribosome with GTP-bound translation factors. This chain is Large ribosomal subunit protein uL10, found in Borrelia duttonii (strain Ly).